We begin with the raw amino-acid sequence, 69 residues long: Beta-defensin 43 (69 aa).

The N-terminal stretch at 1 to 22 (MRVLFSILGVLTLLSIVPLARS) is a signal peptide. 2 disulfides stabilise this stretch: Cys-29/Cys-56 and Cys-35/Cys-49.

It belongs to the beta-defensin family.

It localises to the secreted. Has bactericidal activity. This chain is Beta-defensin 43 (Defb43), found in Mus musculus (Mouse).